We begin with the raw amino-acid sequence, 325 residues long: Putative 1-aminocyclopropane-1-carboxylate deaminase (325 aa).

Position 54 is an N6-(pyridoxal phosphate)lysine (Lys54).

It belongs to the ACC deaminase/D-cysteine desulfhydrase family. Pyridoxal 5'-phosphate is required as a cofactor.

It catalyses the reaction 1-aminocyclopropane-1-carboxylate + H2O = 2-oxobutanoate + NH4(+). The chain is Putative 1-aminocyclopropane-1-carboxylate deaminase from Pyrococcus horikoshii (strain ATCC 700860 / DSM 12428 / JCM 9974 / NBRC 100139 / OT-3).